The chain runs to 340 residues: Fructose-bisphosphate aldolase (340 aa).

A D-glyceraldehyde 3-phosphate-binding site is contributed by Ser53. Residue Asp95 is the Proton donor of the active site. The Zn(2+) site is built by His96, Asp131, Glu161, and His212. Gly213 serves as a coordination point for dihydroxyacetone phosphate. Residue His249 coordinates Zn(2+). Dihydroxyacetone phosphate-binding positions include 250–252 (GGS) and 271–274 (NLDT).

The protein belongs to the class II fructose-bisphosphate aldolase family. It depends on Zn(2+) as a cofactor.

It carries out the reaction beta-D-fructose 1,6-bisphosphate = D-glyceraldehyde 3-phosphate + dihydroxyacetone phosphate. The protein operates within carbohydrate degradation; glycolysis; D-glyceraldehyde 3-phosphate and glycerone phosphate from D-glucose: step 4/4. Its function is as follows. Catalyzes the aldol condensation of dihydroxyacetone phosphate (DHAP or glycerone-phosphate) with glyceraldehyde 3-phosphate (G3P) to form fructose 1,6-bisphosphate (FBP) in gluconeogenesis and the reverse reaction in glycolysis. The polypeptide is Fructose-bisphosphate aldolase (fba) (Streptomyces galbus).